The sequence spans 224 residues: MSRSSSSMATVLVVLMVVSAGGLSPPCAAAAKEEKPVVVLPPAAAPGEAPSADAAAFVRSCCDTALQADRDGSSFCYYHLLPYAAFFEGNQVKVAEVAATILSTNLWVYVDQLRKVQGGAGKGDPNLNACVDDFSVAAGENITREALQSLGRLAAAGNGKRSKEDLENAQKWIKGVEKPYNGGIGKASGCEIGYLFTYSDDLPAQKTLGYTFDTASSLINHIKL.

The first 30 residues, 1–30, serve as a signal peptide directing secretion; the sequence is MSRSSSSMATVLVVLMVVSAGGLSPPCAAA. A glycan (N-linked (GlcNAc...) asparagine) is linked at Asn-141.

It is found in the secreted. This is an uncharacterized protein from Oryza sativa subsp. japonica (Rice).